The primary structure comprises 479 residues: Cobyric acid synthase (479 aa).

A GATase cobBQ-type domain is found at 250 to 442; sequence TRTVAVVAYP…LHGLFEDAAA (193 aa). The Nucleophile role is filled by Cys-331. His-434 is a catalytic residue.

It belongs to the CobB/CobQ family. CobQ subfamily.

It functions in the pathway cofactor biosynthesis; adenosylcobalamin biosynthesis. Its function is as follows. Catalyzes amidations at positions B, D, E, and G on adenosylcobyrinic A,C-diamide. NH(2) groups are provided by glutamine, and one molecule of ATP is hydrogenolyzed for each amidation. In Variovorax paradoxus (strain S110), this protein is Cobyric acid synthase.